The primary structure comprises 231 residues: Large ribosomal subunit protein uL1 (231 aa).

It belongs to the universal ribosomal protein uL1 family. In terms of assembly, part of the 50S ribosomal subunit.

Functionally, binds directly to 23S rRNA. The L1 stalk is quite mobile in the ribosome, and is involved in E site tRNA release. Protein L1 is also a translational repressor protein, it controls the translation of the L11 operon by binding to its mRNA. The sequence is that of Large ribosomal subunit protein uL1 from Agrobacterium fabrum (strain C58 / ATCC 33970) (Agrobacterium tumefaciens (strain C58)).